The primary structure comprises 79 residues: Large ribosomal subunit protein eL38 (79 aa).

This sequence belongs to the eukaryotic ribosomal protein eL38 family.

This is Large ribosomal subunit protein eL38 (RPL38) from Theileria parva (East coast fever infection agent).